The sequence spans 275 residues: Formamidopyrimidine-DNA glycosylase (275 aa).

P2 (schiff-base intermediate with DNA) is an active-site residue. Residue E3 is the Proton donor of the active site. The active-site Proton donor; for beta-elimination activity is the K58. Positions 91 and 110 each coordinate DNA. The FPG-type zinc-finger motif lies at 238–272 (QVYGQTGKSCPRCGQAIVKLKVGGRGTHICPKCQK). R262 serves as the catalytic Proton donor; for delta-elimination activity.

It belongs to the FPG family. Monomer. Requires Zn(2+) as cofactor.

The catalysed reaction is Hydrolysis of DNA containing ring-opened 7-methylguanine residues, releasing 2,6-diamino-4-hydroxy-5-(N-methyl)formamidopyrimidine.. It carries out the reaction 2'-deoxyribonucleotide-(2'-deoxyribose 5'-phosphate)-2'-deoxyribonucleotide-DNA = a 3'-end 2'-deoxyribonucleotide-(2,3-dehydro-2,3-deoxyribose 5'-phosphate)-DNA + a 5'-end 5'-phospho-2'-deoxyribonucleoside-DNA + H(+). In terms of biological role, involved in base excision repair of DNA damaged by oxidation or by mutagenic agents. Acts as a DNA glycosylase that recognizes and removes damaged bases. Has a preference for oxidized purines, such as 7,8-dihydro-8-oxoguanine (8-oxoG). Has AP (apurinic/apyrimidinic) lyase activity and introduces nicks in the DNA strand. Cleaves the DNA backbone by beta-delta elimination to generate a single-strand break at the site of the removed base with both 3'- and 5'-phosphates. The polypeptide is Formamidopyrimidine-DNA glycosylase (Streptococcus pyogenes serotype M3 (strain ATCC BAA-595 / MGAS315)).